Consider the following 658-residue polypeptide: Structure-specific endonuclease subunit SLX4 (658 aa).

Disordered stretches follow at residues 17 to 37 (VDSD…IPGD), 74 to 123 (GATE…KSIT), and 327 to 383 (QPGV…QVLQ). Low complexity-rich tracts occupy residues 75–90 (ATES…PPAK) and 99–108 (KAAGRTSTGT). Positions 365–374 (FPKSPTSTPE) are enriched in polar residues.

The protein belongs to the SLX4 family. In terms of assembly, forms a heterodimer with SLX1. Phosphorylated in response to DNA damage.

The protein resides in the nucleus. In terms of biological role, regulatory subunit of the SLX1-SLX4 structure-specific endonuclease that resolves DNA secondary structures generated during DNA repair and recombination. Has endonuclease activity towards branched DNA substrates, introducing single-strand cuts in duplex DNA close to junctions with ss-DNA. This chain is Structure-specific endonuclease subunit SLX4, found in Lachancea thermotolerans (strain ATCC 56472 / CBS 6340 / NRRL Y-8284) (Yeast).